We begin with the raw amino-acid sequence, 478 residues long: Cytochrome c-552 (478 aa).

The signal sequence occupies residues 1–26 (MARKTLRARRFFSLIFPFFFITSVYA). Histidine 94 contributes to the heme c binding site. Positions 122, 125, and 126 each coordinate heme. Heme c contacts are provided by cysteine 160, cysteine 163, histidine 164, cysteine 209, cysteine 212, and histidine 213. Residues glutamate 215, tyrosine 216, lysine 261, and glutamine 263 each contribute to the Ca(2+) site. Tyrosine 216 is a substrate binding site. Histidine 264 lines the substrate pocket. Heme c is bound by residues histidine 275, cysteine 282, cysteine 285, histidine 286, histidine 301, cysteine 314, cysteine 317, histidine 318, and histidine 393.

This sequence belongs to the cytochrome c-552 family. It depends on Ca(2+) as a cofactor. Heme c serves as cofactor.

Its subcellular location is the periplasm. The catalysed reaction is 6 Fe(III)-[cytochrome c] + NH4(+) + 2 H2O = 6 Fe(II)-[cytochrome c] + nitrite + 8 H(+). The protein operates within nitrogen metabolism; nitrate reduction (assimilation). Catalyzes the reduction of nitrite to ammonia, consuming six electrons in the process. The polypeptide is Cytochrome c-552 (Salmonella paratyphi C (strain RKS4594)).